Reading from the N-terminus, the 199-residue chain is DnaJ homolog subfamily C member 5B (199 aa).

Phosphoserine occurs at positions 14 and 16. A J domain is found at 19–84 (ALYEILGLHK…SKRNIYDKYG (66 aa)).

As to quaternary structure, interacts with the chaperone complex consisting of HSC70 and SGTA. Palmitoylated.

Its subcellular location is the membrane. The protein is DnaJ homolog subfamily C member 5B (DNAJC5B) of Bos taurus (Bovine).